The sequence spans 269 residues: Meiotic drive suppressor wtf5 (269 aa).

The segment at 1–67 is disordered; it reads MKNNHTSLKS…HRENHSYRTT (67 aa). The span at 19-30 shows a compositional bias: basic and acidic residues; the sequence is KTDHEIDLEKGP. 5 consecutive transmembrane segments (helical) span residues 73-93, 110-130, 140-160, 174-194, and 216-236; these read LLIK…PAVC, WTLF…LTYF, VTVI…AQCV, WENM…VGSP, and IIFV…PGSI.

The protein belongs to the WTF family. Homomer. Interacts with other proteins that exhibit high sequence similarity.

It localises to the spore membrane. Its subcellular location is the vacuole membrane. Functionally, acts as a suppressor component of the dual wtf meiotic drive system, and can suppress but not confer meiotic drive by compatible poisons. Wtf meiotic drive systems promote unequal transmission of alleles from the parental zygote to progeny spores by encoding a poison and an antidote from the same locus; the poison is trans-acting and forms toxic aggregates in all spores within an ascus, wherease the antidote is spore-specific and targets aggregates for degradation by the vacuole. Meiotic drive by wtf systems therefore lead to poisoning of all progeny that do not inherit the dual poison/antidote allele, or express a compatible antidote. The polypeptide is Meiotic drive suppressor wtf5 (Schizosaccharomyces kambucha (Fission yeast)).